The following is a 129-amino-acid chain: Small ribosomal subunit protein uS11 (129 aa).

This sequence belongs to the universal ribosomal protein uS11 family. Part of the 30S ribosomal subunit. Interacts with proteins S7 and S18. Binds to IF-3.

Its function is as follows. Located on the platform of the 30S subunit, it bridges several disparate RNA helices of the 16S rRNA. Forms part of the Shine-Dalgarno cleft in the 70S ribosome. This is Small ribosomal subunit protein uS11 from Idiomarina loihiensis (strain ATCC BAA-735 / DSM 15497 / L2-TR).